A 216-amino-acid chain; its full sequence is Glycerol-3-phosphate acyltransferase (216 aa).

5 helical membrane passes run 5 to 25 (LIAL…FGLV), 70 to 90 (IAAA…AGAF), 118 to 138 (VVFW…AAIF), 140 to 160 (ISSL…LAWG), and 164 to 184 (VAIM…ANIS). A compositionally biased stretch (basic and acidic residues) spans 192–201 (PRIGGKKSET). Positions 192–216 (PRIGGKKSETSADVSDGDDPDTPAT) are disordered. A compositionally biased stretch (acidic residues) spans 206–216 (SDGDDPDTPAT).

This sequence belongs to the PlsY family. In terms of assembly, probably interacts with PlsX.

The protein resides in the cell inner membrane. The catalysed reaction is an acyl phosphate + sn-glycerol 3-phosphate = a 1-acyl-sn-glycero-3-phosphate + phosphate. It functions in the pathway lipid metabolism; phospholipid metabolism. Catalyzes the transfer of an acyl group from acyl-phosphate (acyl-PO(4)) to glycerol-3-phosphate (G3P) to form lysophosphatidic acid (LPA). This enzyme utilizes acyl-phosphate as fatty acyl donor, but not acyl-CoA or acyl-ACP. In Maricaulis maris (strain MCS10) (Caulobacter maris), this protein is Glycerol-3-phosphate acyltransferase.